Here is a 317-residue protein sequence, read N- to C-terminus: Melanocyte-stimulating hormone receptor (317 aa).

At 1–37 (MAVQGSQRRLLGSLNSTPTAIPQLGLAANQTGARCLE) the chain is on the extracellular side. N-linked (GlcNAc...) asparagine glycosylation is present at Asn29. A helical membrane pass occupies residues 38–63 (VSISDGLFLSLGLVSLVENALVVATI). The Cytoplasmic segment spans residues 64–72 (AKNRNLHSP). The chain crosses the membrane as a helical span at residues 73–93 (MYCFICCLALSDLLVSGSNVL). The Extracellular segment spans residues 94-118 (ETAVILLLEAGALVARAAVLQQLDN). A helical membrane pass occupies residues 119-140 (VIDVITCSSMLSSLCFLGAIAV). Residues 141–163 (DRYISIFYALRYHSIVTLPRARR) are Cytoplasmic-facing. A helical membrane pass occupies residues 164–183 (AVAAIWVASVVFSTLFIAYY). Residues 184 to 191 (DHVAVLLC) are Extracellular-facing. Residues 192-211 (LVVFFLAMLVLMAVLYVHML) form a helical membrane-spanning segment. The Cytoplasmic portion of the chain corresponds to 212–240 (ARACQHAQGIARLHKRQRPVHQGFGLKGA). The chain crosses the membrane as a helical span at residues 241–266 (VTLTILLGIFFLCWGPFFLHLTLIVL). Topologically, residues 267-279 (CPEHPTCGCIFKN) are extracellular. A helical membrane pass occupies residues 280-300 (FNLFLALIICNAIIDPLIYAF). The Cytoplasmic portion of the chain corresponds to 301–317 (HSQELRRTLKEVLTCSW). Cys315 is lipidated: S-palmitoyl cysteine.

It belongs to the G-protein coupled receptor 1 family. In terms of assembly, interacts with MGRN1, but does not undergo MGRN1-mediated ubiquitination; this interaction competes with GNAS-binding and thus inhibits agonist-induced cAMP production. Interacts with OPN3; the interaction results in a decrease in MC1R-mediated cAMP signaling and ultimately a decrease in melanin production in melanocytes. As to expression, expressed in melanocytes. Expressed in corticoadrenal tissue.

The protein resides in the cell membrane. In terms of biological role, receptor for MSH (alpha, beta and gamma) and ACTH. The activity of this receptor is mediated by G proteins which activate adenylate cyclase. Mediates melanogenesis, the production of eumelanin (black/brown) and phaeomelanin (red/yellow), via regulation of cAMP signaling in melanocytes. The sequence is that of Melanocyte-stimulating hormone receptor (MC1R) from Homo sapiens (Human).